We begin with the raw amino-acid sequence, 541 residues long: Tyrosine-protein phosphatase non-receptor type 5 (541 aa).

The disordered stretch occupies residues 1–55; it reads MCCSERLLGLPQPVEMEAPDEAEGLPSKQKEMPPPPPPSPPSEPAQKLPPQGAGS. Over residues 32-43 the composition is skewed to pro residues; it reads MPPPPPPSPPSE. 2 helical membrane-spanning segments follow: residues 64-84 and 122-142; these read LCLF…LSGH and LLLV…WHLL. Residue Ser-221 is modified to Phosphoserine; by PKA. At Thr-231 the chain carries Phosphothreonine; by MAPK. Ser-244 is subject to Phosphoserine; by MAPK. The Tyrosine-protein phosphatase domain maps to 276 to 531; sequence LQAEFFEIPM…QFVHHAMSLY (256 aa). Substrate-binding positions include Asp-437, 472–478, and Gln-516; that span reads CSAGIGR. Cys-472 acts as the Phosphocysteine intermediate in catalysis.

This sequence belongs to the protein-tyrosine phosphatase family. Non-receptor class subfamily. Post-translationally, phosphorylation at Ser-221 by PKA deactivates PTPN5. Phosphorylation at Thr-231 and Ser-244 by MAPKs stabilizes the phosphatase, dephosphorylation of these sites results in ubiquitin-mediated degradation of the active phosphatase. STEP20 is expressed only in the CNS.

The protein resides in the endoplasmic reticulum membrane. It localises to the cytoplasm. The catalysed reaction is O-phospho-L-tyrosyl-[protein] + H2O = L-tyrosyl-[protein] + phosphate. Its function is as follows. May regulate the activity of several effector molecules involved in synaptic plasticity and neuronal cell survival, including MAPKs, Src family kinases and NMDA receptors. In Mus musculus (Mouse), this protein is Tyrosine-protein phosphatase non-receptor type 5 (Ptpn5).